We begin with the raw amino-acid sequence, 778 residues long: MNNKIIETLEFHKVRQKIEPYLLTEQGFEELRQLEPMVEVHRIQQAFDELTDIAQIFVENPYFSLAATSDIGPAMRRLELDTDLNIAELLAVKKVLEVSKSLLDFYGNLENVSLSQQLDKLFEKIELFPHLQGSLQSINDAGFVEDFASEKLARIRRKIREAEDQVRQVMQDILKTKGDMLSDSILASRNGRNVLPVKNTYRNKIAGVVHDISASGSTVYIEPRAVVTLNEEISHLRAEERHELNRILQELSDMLRPHGGVIRNNAWLIGHIDFVRAKHLFARDHQAVVPKLSEKQDIALLNVRHPLIAKPVPNDLYFGSQLTAIVITGPNTGGKTIMLKTLGLTHLMAQSGLPILADKGSRVAIFKEIFADIGDEQSIEQSLSTFSSHMTHTVEILRAADQDSLILFDELGAGTDPQEGASLAMAILDDLRLRGIKTMATTHYPELKAYGIETSGIENASMEFDSNSLRPTYKFMQGVPGRSNAFEIARRLGLSDIIIQSAQSWTDTDSDVNRIIEKLESQTVESRQRLDKIRDVEQENYKMNRALRKLYDELNRERENELNKARLEAKEIVDMALAESEDILKNLHAAASLKPHQIIEAKAELKKLAPEVVDLSKNKVLKKAKIKREAKVGDDIIVTAYGQRGTLTNQLKDGRWEAQVGLIKMTLAKDEFELVKAEKAEQPKKRQVHTVKRANVRGPKARLDLRGKRYEEAMMELDEFIDQALLNNLAQVDIVHGIGTGVIREGVTKYLRRNKQIKEFGYAPQNAGGSGCTIVTFK.

Residue G329 to T336 coordinates ATP. The Smr domain occupies L703 to K778.

This sequence belongs to the DNA mismatch repair MutS family. MutS2 subfamily. Homodimer. Binds to stalled ribosomes, contacting rRNA.

Endonuclease that is involved in the suppression of homologous recombination and thus may have a key role in the control of bacterial genetic diversity. Its function is as follows. Acts as a ribosome collision sensor, splitting the ribosome into its 2 subunits. Detects stalled/collided 70S ribosomes which it binds and splits by an ATP-hydrolysis driven conformational change. Acts upstream of the ribosome quality control system (RQC), a ribosome-associated complex that mediates the extraction of incompletely synthesized nascent chains from stalled ribosomes and their subsequent degradation. Probably generates substrates for RQC. The sequence is that of Endonuclease MutS2 from Streptococcus suis (strain 98HAH33).